Consider the following 245-residue polypeptide: uncharacterized protein (245 aa).

Positions 162–174 (KEQSDVTTSERTR) are enriched in basic and acidic residues. The interval 162-183 (KEQSDVTTSERTRSPPGSSKTT) is disordered.

This is an uncharacterized protein from Homo sapiens (Human).